Reading from the N-terminus, the 1264-residue chain is MSGPSDETAGDLPVKDTGLNLFGVGGLQETSTARTVKTRQAVSRVSREELEDRFLRLHDENILLKQHARKQEDKIKRMATKLIRLVNDKKRYERVGGGPKRLGRDVEMEEMIEQLQEKVHELERQNEVLKNRLISAKQQLQVQGHRQTSYSRVQARVNTGRRRASASAGSQECPGKGLRFQNVDEAETVQPTLTKYSNSLLEEARGEIRNLENVIQSQRGQIEELEHLAEILKTQLKRKENEIELSLLQLREQQATDQRSNIRDNVETIKLHKQLVEKSNALSVIEGKFIQLQEKQRTLRISHDALMANGDELNKQLKEQRLKCCSLEKQLHSVRFSERRVEELQDRINDLEKERELLKENYDKLYNSAFSAAHEEQWKLKEQQMKVQIAQLETALKSDLTDKTEVLDKLKTERDQNEKLVQENRDLQLQCLQQKQRLHELQSRLKFFNQESDINADDLSEALLLIKAQKEQKNGDLSFLEKVDSKINKDLDRSMKELQATHAETVQELEKTRNMLIMQHKINKDYQMEVETVTQKMENLQQDYELKVEQYVHLLDIRAARIQKLEAQLKDIAYGTKQYKFKPEIMPDDSVDEFDETIHLERGENLFEIHINKVTFSSEVLRASGDKELVTFCTYAFYDFELQTTPIVRGLYPEYNFTSQYLVHVNDLFLQYIQKNTVTLELHQAHSTDYETIAACQLRFHEILEKSGRIFCTTSLVGTKGDIPNFGTVEYWFRLRVPMDQAIRLYRERAKALGYITSNFKKPEKMQLSSQQAATTAQISPAESTDGNLNELHVTVKCCTGLQSRASYLQPHAYVVYKFFDFPDHDTAIVPSSNDPQFDDHMCFPVPMNMDLDRYLKSESLSFYVFDDSDTQENIYMGKVNVPLISLAHDKCISGIFELMDKEKHAAGTIQVILKWKFTYLPPSGSITTEDLGKFVCREEPEAVQRLPPKSSDVTSVVAPKPKPRQRLTFVDKKVSFADTISHPSPETSPPPKDIKDSSPEVGPKPENGLSAVAYPSKESGVAKVEENVGEMQQGKEDDISFLSEGQLASGSVASSEDETEITEELEPEDEDRSASDSDDCIIPSSVSTNTKQPSEEIRIEIIALNLNDSQITREDTIQRLFIECRFYSLPAEETPMSLPKPQSGQWVYYNYSNVIYLDKENNPAVRDILKAILQRRELPHRSVRFTVVSDPPEDEQDLECEDIGVAHVDLADLFQKGRDIIEQDIDVLDARTDGGTIGKLKVTVEALHALRSVYEQNRKDLEA.

Coiled-coil stretches lie at residues 64 to 143 (LKQH…LQVQ), 196 to 268 (YSNS…NVET), 299 to 454 (LRIS…ESDI), and 488 to 555 (NKDL…VHLL). 2 C2 domains span residues 577 to 714 (KQYK…FCTT) and 773 to 897 (AATT…SGIF). Disordered stretches follow at residues 979-1018 (DTIS…YPSK) and 1047-1093 (QLAS…NTKQ). Residues 1056–1080 (SEDETEITEELEPEDEDRSASDSDD) are compositionally biased toward acidic residues.

It belongs to the RPGRIP1 family. Interacts with NPHP4 and NPHP1; NPHP1, NPHP4 and RPGRIP1L are proposed to form a functional NPHP1-4-8 module localized to cell-cell contacts and the ciliary transition zone; NPHP4 mediates the interaction between NPHP1 and RPGRIP1L. Interacts with IQCB1; the interaction likely requires additional interactors. Interacts with TBXA2R (via C-terminus), RPGR, NEK4. Interacts with NPHP4, INVS and DVL2; proposed to form a complex involved in DVL2 stabilization. Interacts with PSMD2. In terms of tissue distribution, ubiquitously expressed. Not found in heart and skin.

The protein localises to the cytoplasm. Its subcellular location is the cytoskeleton. It localises to the cilium basal body. It is found in the cilium axoneme. The protein resides in the microtubule organizing center. The protein localises to the centrosome. Its subcellular location is the cell junction. It localises to the tight junction. Negatively regulates signaling through the G-protein coupled thromboxane A2 receptor (TBXA2R). May be involved in mechanisms like programmed cell death, craniofacial development, patterning of the limbs, and formation of the left-right axis. Involved in the organization of apical junctions; the function is proposed to implicate a NPHP1-4-8 module. Does not seem to be strictly required for ciliogenesis. Involved in establishment of planar cell polarity such as in cochlear sensory epithelium and is proposed to implicate stabilization of disheveled proteins. Involved in regulation of proteasomal activity at the primary cilium probably implicating association with PSDM2. The protein is Protein fantom (Rpgrip1l) of Mus musculus (Mouse).